The chain runs to 258 residues: Acetylglutamate kinase (258 aa).

Residues 44–45 (GG), Arg-66, and Asn-158 contribute to the substrate site. Residues 181–186 (DVSGIL) and 209–211 (IIT) contribute to the ATP site.

It belongs to the acetylglutamate kinase family. ArgB subfamily. In terms of assembly, homodimer.

It localises to the cytoplasm. The catalysed reaction is N-acetyl-L-glutamate + ATP = N-acetyl-L-glutamyl 5-phosphate + ADP. Its pathway is amino-acid biosynthesis; L-arginine biosynthesis; N(2)-acetyl-L-ornithine from L-glutamate: step 2/4. Catalyzes the ATP-dependent phosphorylation of N-acetyl-L-glutamate. The protein is Acetylglutamate kinase of Escherichia coli O6:K15:H31 (strain 536 / UPEC).